Here is a 95-residue protein sequence, read N- to C-terminus: Co-chaperonin GroES (95 aa).

It belongs to the GroES chaperonin family. Heptamer of 7 subunits arranged in a ring. Interacts with the chaperonin GroEL.

Its subcellular location is the cytoplasm. In terms of biological role, together with the chaperonin GroEL, plays an essential role in assisting protein folding. The GroEL-GroES system forms a nano-cage that allows encapsulation of the non-native substrate proteins and provides a physical environment optimized to promote and accelerate protein folding. GroES binds to the apical surface of the GroEL ring, thereby capping the opening of the GroEL channel. This chain is Co-chaperonin GroES, found in Rickettsia canadensis (strain McKiel).